A 235-amino-acid polypeptide reads, in one-letter code: Chalcone--flavanone isomerase 2 (235 aa).

Substrate is bound by residues T50 and S192.

This sequence belongs to the chalcone isomerase family.

It carries out the reaction a chalcone = a flavanone.. It functions in the pathway secondary metabolite biosynthesis; flavonoid biosynthesis. Catalyzes the intramolecular cyclization of bicyclic chalcones into tricyclic (S)-flavanones. Responsible for the isomerization of 4,2',4',6'-tetrahydroxychalcone (also termed chalcone) into naringenin. This chain is Chalcone--flavanone isomerase 2 (CHI2), found in Chrysanthemum morifolium (Florist's daisy).